Here is a 233-residue protein sequence, read N- to C-terminus: Pirin-like protein YhaK (233 aa).

The protein belongs to the pirin family. As to quaternary structure, monomer.

The protein localises to the cytoplasm. In terms of biological role, does not have quercetin 2,3-dioxygenase activity. This chain is Pirin-like protein YhaK (yhaK), found in Escherichia coli O157:H7.